Here is a 63-residue protein sequence, read N- to C-terminus: uncharacterized protein (63 aa).

This is an uncharacterized protein from Homo sapiens (Human).